Consider the following 112-residue polypeptide: Larval cuticle protein III/IV (112 aa).

An N-terminal signal peptide occupies residues 1–16 (MFKILLVCALAALVAA). One can recognise a Chitin-binding type R&amp;R domain in the interval 31–92 (PDGFKTVVSL…PSSDLLPVAP (62 aa)).

In terms of biological role, component of the larval cuticle. The polypeptide is Larval cuticle protein III/IV (Lcp3) (Drosophila miranda (Fruit fly)).